The chain runs to 962 residues: Protein lin-36 (962 aa).

Disordered stretches follow at residues 1–53 (MSEE…ETEG) and 74–99 (TSSG…PREE). Positions 23–40 (DSHVTVHSVEQDSQHSGE) are enriched in basic and acidic residues. Over residues 74 to 95 (TSSGEVLDESQVTPTKQASSSQ) the composition is skewed to polar residues. A THAP-type zinc finger spans residues 161–249 (LTHKPCTVCN…IEAFGVPVAI (89 aa)). Composition is skewed to basic and acidic residues over residues 452-472 (KAEE…KHAE) and 534-570 (SHEE…DEQF). Disordered regions lie at residues 452–575 (KAEE…KMVQ), 612–676 (IAAT…PEER), 744–788 (QEKG…SASS), and 932–962 (DPKW…DSQQ). Residues 626 to 637 (SSEQTPEPTTSQ) are compositionally biased toward low complexity. The span at 647-658 (KTKESAVQKVEK) shows a compositional bias: basic and acidic residues. Positions 939–951 (QQQQQQQQQQQEQ) are enriched in low complexity. A compositionally biased stretch (polar residues) spans 952–962 (FPGQGSSDSQQ).

Expressed in vulval precursor P(3-8).p cells and their descendants, neurons of the head, tail and ventral cord, hypodermal and intestinal cells and germline cells.

It localises to the nucleus. Functionally, required to negatively regulate vulval development. Antagonizes Ras-mediated vulval induction. Acts cell autonomously. The polypeptide is Protein lin-36 (lin-36) (Caenorhabditis elegans).